A 116-amino-acid chain; its full sequence is MRFFSYLGLLLAGLASLASLAGLVSLANLQDFSTDNPLEEELRCWCQYVKNCRFCWACQDGFCKNKVLKNMPSVQEHSYPMEHCMLHRQCKYIRDGPIFQVECTMQTCDAIRLLNV.

The N-terminal stretch at 1-19 (MRFFSYLGLLLAGLASLAS) is a signal peptide.

The protein belongs to the asfivirus MGF 110 family.

In terms of biological role, plays a role in virus cell tropism, and may be required for efficient virus replication in macrophages. The chain is Protein MGF 110-2L from Ornithodoros (relapsing fever ticks).